The sequence spans 490 residues: Betaine aldehyde dehydrogenase (490 aa).

Residues Thr-26 and Asp-93 each contribute to the K(+) site. 150 to 152 (GAW) lines the NAD(+) pocket. Residue Lys-162 is the Charge relay system of the active site. 176–179 (KPSE) contributes to the NAD(+) binding site. A K(+)-binding site is contributed by Val-180. NAD(+) is bound at residue 230–233 (GVAT). Leu-246 contributes to the K(+) binding site. Glu-252 functions as the Proton acceptor in the catalytic mechanism. 3 residues coordinate NAD(+): Gly-254, Cys-286, and Glu-387. Cys-286 acts as the Nucleophile in catalysis. At Cys-286 the chain carries Cysteine sulfenic acid (-SOH). Positions 457 and 460 each coordinate K(+). Residue Glu-464 is the Charge relay system of the active site.

Belongs to the aldehyde dehydrogenase family. Dimer of dimers. K(+) serves as cofactor.

It carries out the reaction betaine aldehyde + NAD(+) + H2O = glycine betaine + NADH + 2 H(+). It participates in amine and polyamine biosynthesis; betaine biosynthesis via choline pathway; betaine from betaine aldehyde: step 1/1. Involved in the biosynthesis of the osmoprotectant glycine betaine. Catalyzes the irreversible oxidation of betaine aldehyde to the corresponding acid. This Stenotrophomonas maltophilia (strain K279a) protein is Betaine aldehyde dehydrogenase.